Here is a 133-residue protein sequence, read N- to C-terminus: Putative pre-16S rRNA nuclease (133 aa).

This sequence belongs to the YqgF nuclease family.

It is found in the cytoplasm. Could be a nuclease involved in processing of the 5'-end of pre-16S rRNA. This is Putative pre-16S rRNA nuclease from Bordetella pertussis (strain Tohama I / ATCC BAA-589 / NCTC 13251).